Here is a 587-residue protein sequence, read N- to C-terminus: Folylpolyglutamate synthase, mitochondrial (587 aa).

The N-terminal 42 residues, Met1–Ser42, are a transit peptide targeting the mitochondrion. Met43 bears the N-acetylmethionine mark. Gly106–Ser109 contacts ATP. Residues Ser130, Glu200, and His228 each contribute to the Mg(2+) site. ATP-binding residues include Arg363 and Asp377. Ser539 carries the phosphoserine modification.

This sequence belongs to the folylpolyglutamate synthase family. As to quaternary structure, monomer. Requires K(+) as cofactor. NH4(+) is required as a cofactor.

It is found in the mitochondrion inner membrane. Its subcellular location is the mitochondrion matrix. The protein localises to the cytoplasm. It carries out the reaction (6S)-5,6,7,8-tetrahydrofolyl-(gamma-L-Glu)(n) + L-glutamate + ATP = (6S)-5,6,7,8-tetrahydrofolyl-(gamma-L-Glu)(n+1) + ADP + phosphate + H(+). It functions in the pathway cofactor biosynthesis; tetrahydrofolylpolyglutamate biosynthesis. With respect to regulation, activated by 10 mM sodium bicarbonate. Functionally, catalyzes conversion of folates to polyglutamate derivatives allowing concentration of folate compounds in the cell and the intracellular retention of these cofactors, which are important substrates for most of the folate-dependent enzymes that are involved in one-carbon transfer reactions involved in purine, pyrimidine and amino acid synthesis. Unsubstituted reduced folates are the preferred substrates. Metabolizes methotrexate (MTX) to polyglutamates. This chain is Folylpolyglutamate synthase, mitochondrial (FPGS), found in Homo sapiens (Human).